The sequence spans 274 residues: HTH-type transcriptional regulator GadX (274 aa).

An HTH araC/xylS-type domain is found at T145–R242. 2 consecutive DNA-binding regions (H-T-H motif) follow at residues A162 to G183 and I209 to Y232.

In terms of assembly, homodimer.

Positively regulates the expression of about fifteen genes involved in acid resistance such as gadA, gadB and gadC. Depending on the conditions (growth phase and medium), can repress gadW. Negatively regulates perA expression in acidic conditions and positively regulates it in alkaline conditions. The sequence is that of HTH-type transcriptional regulator GadX (gadX) from Escherichia coli O127:H6 (strain E2348/69 / EPEC).